Here is a 415-residue protein sequence, read N- to C-terminus: Serine--tRNA ligase (415 aa).

230–232 (TAE) is a binding site for L-serine. 261-263 (RKE) serves as a coordination point for ATP. Glu284 is a binding site for L-serine. 348-351 (EISS) contacts ATP. Ser382 contacts L-serine.

Belongs to the class-II aminoacyl-tRNA synthetase family. Type-1 seryl-tRNA synthetase subfamily. As to quaternary structure, homodimer. The tRNA molecule binds across the dimer.

It is found in the cytoplasm. It catalyses the reaction tRNA(Ser) + L-serine + ATP = L-seryl-tRNA(Ser) + AMP + diphosphate + H(+). The catalysed reaction is tRNA(Sec) + L-serine + ATP = L-seryl-tRNA(Sec) + AMP + diphosphate + H(+). The protein operates within aminoacyl-tRNA biosynthesis; selenocysteinyl-tRNA(Sec) biosynthesis; L-seryl-tRNA(Sec) from L-serine and tRNA(Sec): step 1/1. Functionally, catalyzes the attachment of serine to tRNA(Ser). Is also able to aminoacylate tRNA(Sec) with serine, to form the misacylated tRNA L-seryl-tRNA(Sec), which will be further converted into selenocysteinyl-tRNA(Sec). The chain is Serine--tRNA ligase from Sulfurimonas denitrificans (strain ATCC 33889 / DSM 1251) (Thiomicrospira denitrificans (strain ATCC 33889 / DSM 1251)).